Reading from the N-terminus, the 173-residue chain is Putative metal-dependent hydrolase BCE_2729 (173 aa).

His-65, His-156, and His-160 together coordinate Zn(2+).

Belongs to the metal hydrolase YfiT family. Homodimer. Requires Zn(2+) as cofactor.

Its subcellular location is the cytoplasm. Functionally, possible metal-dependent hydrolase. In Bacillus cereus (strain ATCC 10987 / NRS 248), this protein is Putative metal-dependent hydrolase BCE_2729.